Reading from the N-terminus, the 372-residue chain is Chaperone protein DnaJ (372 aa).

The region spanning 5–69 is the J domain; the sequence is DYYEVLGVDR…QKKARYDQFG (65 aa). Residues 129–211 form a CR-type zinc finger; it reads GKETEIEIPR…CSGKGKVRKR (83 aa). Residues cysteine 142, cysteine 145, cysteine 159, cysteine 162, cysteine 185, cysteine 188, cysteine 199, and cysteine 202 each contribute to the Zn(2+) site. 4 CXXCXGXG motif repeats span residues 142 to 149, 159 to 166, 185 to 192, and 199 to 206; these read CGTCHGSG, CSHCGGSG, CNYCEGTG, and CATCSGKG.

It belongs to the DnaJ family. In terms of assembly, homodimer. Requires Zn(2+) as cofactor.

The protein resides in the cytoplasm. Participates actively in the response to hyperosmotic and heat shock by preventing the aggregation of stress-denatured proteins and by disaggregating proteins, also in an autonomous, DnaK-independent fashion. Unfolded proteins bind initially to DnaJ; upon interaction with the DnaJ-bound protein, DnaK hydrolyzes its bound ATP, resulting in the formation of a stable complex. GrpE releases ADP from DnaK; ATP binding to DnaK triggers the release of the substrate protein, thus completing the reaction cycle. Several rounds of ATP-dependent interactions between DnaJ, DnaK and GrpE are required for fully efficient folding. Also involved, together with DnaK and GrpE, in the DNA replication of plasmids through activation of initiation proteins. The protein is Chaperone protein DnaJ of Shouchella clausii (strain KSM-K16) (Alkalihalobacillus clausii).